The sequence spans 423 residues: MLSQKSIQIIKSTVPLLEKYGVEITSLFYKNMFEAQPQFLNIFNHSNQRNQKQPVALANTILQSAIHIEKLNEINLMPIVHKHVALGITPEMYPIVGAHLLGAMKTVMQDEATPEIMAAWTEAYRAVAQAFMDAEEDLYFETEEQIGGWKDTREFVVDRIEEETPLIKSFYFKAYDGKEIATYIPGQYITVKITLPGDGVDVPTDKMRTYVRHYSLSDKPNDEYYRISIKKELGKNTPNGIVSNHFHNNIKVGDVVPMSVPAGDFVVNNDSETPILLICGGVGINPLFSMLKETLVQQPDRKINFIFSTHCESSQPFKEELKQLEDDYKETGNLKINLVYSENQGHINKEIIEKYSTQHVDQAEIAETDVYICGPVPFMMQVNKDLLQLGFHKENVHYELFGPLTPVLEENQMLRGVKNIIEN.

The region spanning 1–136 (MLSQKSIQII…VAQAFMDAEE (136 aa)) is the Globin domain. Residue His-83 participates in heme b binding. Residues Tyr-93 and Glu-135 each act as charge relay system in the active site. Residues 149–423 (WKDTREFVVD…LRGVKNIIEN (275 aa)) form a reductase region. Residues 150–268 (KDTREFVVDR…SVPAGDFVVN (119 aa)) form the FAD-binding FR-type domain. FAD contacts are provided by residues Tyr-188 and 212–215 (RHYS). 281 to 286 (GVGINP) is an NADP(+) binding site. 400-403 (LFGP) provides a ligand contact to FAD.

The protein belongs to the globin family. Two-domain flavohemoproteins subfamily. This sequence in the C-terminal section; belongs to the flavoprotein pyridine nucleotide cytochrome reductase family. It depends on FAD as a cofactor. Heme b serves as cofactor.

It is found in the cytoplasm. It carries out the reaction 2 nitric oxide + NADPH + 2 O2 = 2 nitrate + NADP(+) + H(+). The enzyme catalyses 2 nitric oxide + NADH + 2 O2 = 2 nitrate + NAD(+) + H(+). Its function is as follows. Is involved in NO detoxification in an aerobic process, termed nitric oxide dioxygenase (NOD) reaction that utilizes O(2) and NAD(P)H to convert NO to nitrate, which protects the cell from various noxious nitrogen compounds. Therefore, plays a central role in the inducible response to nitrosative stress. Functionally, in the presence of oxygen and NADH, it has NADH oxidase activity, which leads to the generation of superoxide and H(2)O(2). Under anaerobic conditions, it also exhibits nitric oxide reductase and FAD reductase activities. However, all these reactions are much lower than NOD activity. This Dictyostelium discoideum (Social amoeba) protein is Flavohemoprotein B (fhbB).